The chain runs to 75 residues: UPF0270 protein Avin_35000 (75 aa).

This sequence belongs to the UPF0270 family.

The protein is UPF0270 protein Avin_35000 of Azotobacter vinelandii (strain DJ / ATCC BAA-1303).